The following is a 244-amino-acid chain: Phosphoadenosine 5'-phosphosulfate reductase (244 aa).

C239 functions as the Nucleophile; cysteine thiosulfonate intermediate in the catalytic mechanism.

It belongs to the PAPS reductase family. CysH subfamily.

Its subcellular location is the cytoplasm. The enzyme catalyses [thioredoxin]-disulfide + sulfite + adenosine 3',5'-bisphosphate + 2 H(+) = [thioredoxin]-dithiol + 3'-phosphoadenylyl sulfate. Its pathway is sulfur metabolism; hydrogen sulfide biosynthesis; sulfite from sulfate: step 3/3. In terms of biological role, catalyzes the formation of sulfite from phosphoadenosine 5'-phosphosulfate (PAPS) using thioredoxin as an electron donor. This Salmonella newport (strain SL254) protein is Phosphoadenosine 5'-phosphosulfate reductase.